We begin with the raw amino-acid sequence, 419 residues long: Serine--tRNA ligase (419 aa).

226 to 228 serves as a coordination point for L-serine; sequence TSE. Residues 257–259 and Val273 each bind ATP; that span reads RRE. Glu280 serves as a coordination point for L-serine. An ATP-binding site is contributed by 344–347; it reads ELTS. Thr379 contacts L-serine.

The protein belongs to the class-II aminoacyl-tRNA synthetase family. Type-1 seryl-tRNA synthetase subfamily. In terms of assembly, homodimer. The tRNA molecule binds across the dimer.

It is found in the cytoplasm. It catalyses the reaction tRNA(Ser) + L-serine + ATP = L-seryl-tRNA(Ser) + AMP + diphosphate + H(+). It carries out the reaction tRNA(Sec) + L-serine + ATP = L-seryl-tRNA(Sec) + AMP + diphosphate + H(+). It functions in the pathway aminoacyl-tRNA biosynthesis; selenocysteinyl-tRNA(Sec) biosynthesis; L-seryl-tRNA(Sec) from L-serine and tRNA(Sec): step 1/1. Functionally, catalyzes the attachment of serine to tRNA(Ser). Is also able to aminoacylate tRNA(Sec) with serine, to form the misacylated tRNA L-seryl-tRNA(Sec), which will be further converted into selenocysteinyl-tRNA(Sec). The protein is Serine--tRNA ligase of Corynebacterium efficiens (strain DSM 44549 / YS-314 / AJ 12310 / JCM 11189 / NBRC 100395).